The sequence spans 416 residues: NADH-quinone oxidoreductase subunit H (416 aa).

The next 9 helical transmembrane spans lie at 16–36 (LILAKAVGVFVFLVLTVLAAI), 84–104 (PVYLLAPVISVIPAFLAFAVI), 124–144 (LAVAVLYILAVTSVGVYGIVL), 165–185 (VVSYEIAMALSFATVFLYAGT), 197–217 (STWYVFLLLPSFLVYVTSMVG), 260–280 (VSALATTMFLGGWHAPWPISL), 288–308 (WWPLLWFTAKVWVFLFVYIWL), 320–340 (FMAIGWKMLIPVSLAWIMIVA), and 353–373 (WASGLLIAGTVLTFGLAVVLW).

The protein belongs to the complex I subunit 1 family. In terms of assembly, NDH-1 is composed of 14 different subunits. Subunits NuoA, H, J, K, L, M, N constitute the membrane sector of the complex.

The protein resides in the cell membrane. It catalyses the reaction a quinone + NADH + 5 H(+)(in) = a quinol + NAD(+) + 4 H(+)(out). Functionally, NDH-1 shuttles electrons from NADH, via FMN and iron-sulfur (Fe-S) centers, to quinones in the respiratory chain. The immediate electron acceptor for the enzyme in this species is believed to be menaquinone. Couples the redox reaction to proton translocation (for every two electrons transferred, four hydrogen ions are translocated across the cytoplasmic membrane), and thus conserves the redox energy in a proton gradient. This subunit may bind ubiquinone. The protein is NADH-quinone oxidoreductase subunit H of Mycobacterium sp. (strain JLS).